The sequence spans 44 residues: Thymosin beta-10 (44 aa).

Composition is skewed to basic and acidic residues over residues Met-1–Glu-25 and Glu-33–Ser-44. The segment at Met-1–Ser-44 is disordered. Ala-2 carries the post-translational modification N-acetylalanine. Lys-4 carries the post-translational modification N6-acetyllysine. Ser-12 bears the Phosphoserine mark. An N6-acetyllysine modification is found at Lys-15. Phosphothreonine is present on residues Thr-21, Thr-23, and Thr-34. Position 39 is an N6-acetyllysine (Lys-39). The residue at position 41 (Ser-41) is a Phosphoserine.

This sequence belongs to the thymosin beta family.

The protein localises to the cytoplasm. Its subcellular location is the cytoskeleton. Functionally, plays an important role in the organization of the cytoskeleton. Binds to and sequesters actin monomers (G actin) and therefore inhibits actin polymerization. The chain is Thymosin beta-10 (Tmsb10) from Rattus norvegicus (Rat).